The following is a 164-amino-acid chain: Large ribosomal subunit protein bL9 (164 aa).

Belongs to the bacterial ribosomal protein bL9 family.

In terms of biological role, binds to the 23S rRNA. The chain is Large ribosomal subunit protein bL9 from Borrelia recurrentis (strain A1).